Here is a 191-residue protein sequence, read N- to C-terminus: Heme-binding protein 1 (191 aa).

This sequence belongs to the HEBP family. In terms of assembly, monomer.

The protein resides in the cytoplasm. Its function is as follows. May bind free porphyrinogens that may be present in the cell and thus facilitate removal of these potentially toxic compound. Binds with a high affinity to one molecule of heme or porphyrins. It binds metalloporphyrins, free porphyrins and N-methylprotoporphyrin with similar affinities. This Bos taurus (Bovine) protein is Heme-binding protein 1 (HEBP1).